A 330-amino-acid chain; its full sequence is MADTSPRTDVSTDDDTDHPDLGSEGALVNTAASDSSDRSKGKMDQKTLRRLAQNREAARKSRLRKKAYVQQLENSRLKLTQLEQELQRARQQGVFISGTGDQAHSTGGNGALAFDAEHSRWLEEKNKQMNELRSALNAHAGDSELRIIVDGVMAHYEELFRIKSNAAKNDVFHLLSGMWKTPAERCFLWLGGFRSSELLKLLANQLEPMTERQLMGINNLQQTSQQAEDALSQGMESLQQSLADTLSSGTLGSSSSGNVASYMGQMAMAMGKLGTLEGFIRQADNLRLQTLQQMIRVLTTRQSARALLAIHDYFSRLRALSSLWLARPRE.

The disordered stretch occupies residues 1–48 (MADTSPRTDVSTDDDTDHPDLGSEGALVNTAASDSSDRSKGKMDQKTL). Basic and acidic residues predominate over residues 35 to 47 (SSDRSKGKMDQKT). The 64-residue stretch at 44–107 (DQKTLRRLAQ…GTGDQAHSTG (64 aa)) folds into the bZIP domain. Coiled-coil stretches lie at residues 45–142 (QKTL…HAGD) and 217–244 (INNL…SLAD). The segment at 46-66 (KTLRRLAQNREAARKSRLRKK) is basic motif. The segment at 72-86 (LENSRLKLTQLEQEL) is leucine-zipper. Residues 111-327 (ALAFDAEHSR…RALSSLWLAR (217 aa)) enclose the DOG1 domain.

This sequence belongs to the bZIP family. In terms of assembly, binds DNA as a dimer. Interacts with NPR1, NPR3 and NPR4. Interacts with GRXC7/ROXY1 and GRXC9/GRX480. As to expression, expressed in the whole plant.

It is found in the nucleus. Transcriptional activator that binds specifically to the DNA sequence 5'-TGACG-3'. Recognizes ocs elements like the as-1 motif of the cauliflower mosaic virus 35S promoter. Binding to the as-1-like cis elements mediate auxin- and salicylic acid-inducible transcription. Required to induce the systemic acquired resistance (SAR) via the regulation of pathogenesis-related genes expression. Binding to the as-1 element of PR-1 promoter is salicylic acid-inducible and mediated by NPR1. Could also bind to the C-boxes (5'-ATGACGTCAT-3') with high affinity. The protein is Transcription factor TGA2 (TGA2) of Arabidopsis thaliana (Mouse-ear cress).